A 205-amino-acid polypeptide reads, in one-letter code: Large ribosomal subunit protein uL18 (205 aa).

It belongs to the universal ribosomal protein uL18 family. Part of the 50S ribosomal subunit. Contacts the 5S and 23S rRNAs.

This is one of the proteins that bind and probably mediate the attachment of the 5S RNA into the large ribosomal subunit, where it forms part of the central protuberance. The chain is Large ribosomal subunit protein uL18 from Pyrobaculum neutrophilum (strain DSM 2338 / JCM 9278 / NBRC 100436 / V24Sta) (Thermoproteus neutrophilus).